The following is a 470-amino-acid chain: Probable citrate synthase, mitochondrial (470 aa).

Residues histidine 297, histidine 351, and aspartate 406 contribute to the active site.

The protein belongs to the citrate synthase family. In terms of assembly, homodimer.

The protein localises to the mitochondrion matrix. The enzyme catalyses oxaloacetate + acetyl-CoA + H2O = citrate + CoA + H(+). It functions in the pathway carbohydrate metabolism; tricarboxylic acid cycle; isocitrate from oxaloacetate: step 1/2. This is Probable citrate synthase, mitochondrial from Leishmania braziliensis.